Here is a 320-residue protein sequence, read N- to C-terminus: Ferrochelatase (320 aa).

Fe cation-binding residues include His-194 and Glu-275.

This sequence belongs to the ferrochelatase family. As to quaternary structure, monomer.

The protein resides in the cytoplasm. The catalysed reaction is heme b + 2 H(+) = protoporphyrin IX + Fe(2+). It functions in the pathway porphyrin-containing compound metabolism; protoheme biosynthesis; protoheme from protoporphyrin-IX: step 1/1. In terms of biological role, catalyzes the ferrous insertion into protoporphyrin IX. The polypeptide is Ferrochelatase (Salmonella typhi).